Consider the following 343-residue polypeptide: MDRIVEIEKVSFESEYEVTLRPLTFEEYIGQEKIKSNLKVFIKAAKKRLESLDHVLFYGPPGLGKTTLAHIIANEMGANIKISSAPMIEKSGDLAAILTNLEEGDVLFIDEIHRLSPAIEEVLYSAMEDFRLDIIIGSGPAAQTIKIDIPKFTLIGATTRAGMISAPLRDRFGMQFRLQFYTDNELARIISIAASKLGKNSTKEASLEIAKRSRGTPRIALRLLKRIRDFAEVSDENSISKDRAKSSLDSLGVNDLGFDEMDLKYLDILVGSKRALGLSTIAAALSEDEGTVEDVIEPYLLSNGYIERTAKGRILSFKSYSVFGITPPMHITEEKQNKGLFNE.

The large ATPase domain (RuvB-L) stretch occupies residues 1 to 181 (MDRIVEIEKV…FGMQFRLQFY (181 aa)). Residues Leu20, Arg21, Gly62, Lys65, Thr66, Thr67, 128–130 (EDF), Arg171, Tyr181, and Arg218 contribute to the ATP site. Thr66 is a binding site for Mg(2+). The tract at residues 182-252 (TDNELARIIS…RAKSSLDSLG (71 aa)) is small ATPAse domain (RuvB-S). A head domain (RuvB-H) region spans residues 255 to 343 (DLGFDEMDLK…EKQNKGLFNE (89 aa)). Residues Arg308 and Arg313 each contribute to the DNA site.

The protein belongs to the RuvB family. In terms of assembly, homohexamer. Forms an RuvA(8)-RuvB(12)-Holliday junction (HJ) complex. HJ DNA is sandwiched between 2 RuvA tetramers; dsDNA enters through RuvA and exits via RuvB. An RuvB hexamer assembles on each DNA strand where it exits the tetramer. Each RuvB hexamer is contacted by two RuvA subunits (via domain III) on 2 adjacent RuvB subunits; this complex drives branch migration. In the full resolvosome a probable DNA-RuvA(4)-RuvB(12)-RuvC(2) complex forms which resolves the HJ.

The protein resides in the cytoplasm. It catalyses the reaction ATP + H2O = ADP + phosphate + H(+). In terms of biological role, the RuvA-RuvB-RuvC complex processes Holliday junction (HJ) DNA during genetic recombination and DNA repair, while the RuvA-RuvB complex plays an important role in the rescue of blocked DNA replication forks via replication fork reversal (RFR). RuvA specifically binds to HJ cruciform DNA, conferring on it an open structure. The RuvB hexamer acts as an ATP-dependent pump, pulling dsDNA into and through the RuvAB complex. RuvB forms 2 homohexamers on either side of HJ DNA bound by 1 or 2 RuvA tetramers; 4 subunits per hexamer contact DNA at a time. Coordinated motions by a converter formed by DNA-disengaged RuvB subunits stimulates ATP hydrolysis and nucleotide exchange. Immobilization of the converter enables RuvB to convert the ATP-contained energy into a lever motion, pulling 2 nucleotides of DNA out of the RuvA tetramer per ATP hydrolyzed, thus driving DNA branch migration. The RuvB motors rotate together with the DNA substrate, which together with the progressing nucleotide cycle form the mechanistic basis for DNA recombination by continuous HJ branch migration. Branch migration allows RuvC to scan DNA until it finds its consensus sequence, where it cleaves and resolves cruciform DNA. The polypeptide is Holliday junction branch migration complex subunit RuvB (Campylobacter fetus subsp. fetus (strain 82-40)).